Reading from the N-terminus, the 433-residue chain is Acetyl-CoA acetyltransferase erg10A, mitochondrial (433 aa).

A mitochondrion-targeting transit peptide spans 1 to 34 (MAIQTTTGLAARLVAKRATFPASRRNFSASRSAL). Cysteine 124 acts as the Acyl-thioester intermediate in catalysis. Tyrosine 219 is a binding site for K(+). 2 residues coordinate CoA: asparagine 229 and lysine 262. Alanine 280 provides a ligand contact to K(+). Residue serine 284 coordinates CoA. Catalysis depends on proton acceptor residues histidine 387 and cysteine 415. Asparagine 416 serves as a coordination point for chloride.

The protein belongs to the thiolase-like superfamily. Thiolase family. As to quaternary structure, homotetramer. It depends on K(+) as a cofactor.

The protein resides in the mitochondrion. The enzyme catalyses 2 acetyl-CoA = acetoacetyl-CoA + CoA. It functions in the pathway metabolic intermediate biosynthesis; (R)-mevalonate biosynthesis; (R)-mevalonate from acetyl-CoA: step 1/3. In terms of biological role, mitochondrial acetyl-CoA acetyltransferase that catalyzes both the formation and degradation of acetoacetyl-CoA. Has no overlapping function with erg10B and seems not to be involved in ergosterol biosynthesis. Plays an important role in growth, morphogenesis and maintaining mitochondrial function including the response to oxidative stresses. This is Acetyl-CoA acetyltransferase erg10A, mitochondrial from Aspergillus fumigatus (strain ATCC MYA-4609 / CBS 101355 / FGSC A1100 / Af293) (Neosartorya fumigata).